We begin with the raw amino-acid sequence, 183 residues long: Putative 3-methyladenine DNA glycosylase (183 aa).

It belongs to the DNA glycosylase MPG family.

In Rickettsia rickettsii (strain Iowa), this protein is Putative 3-methyladenine DNA glycosylase.